The chain runs to 216 residues: Maintenance of carboxysome distribution protein A (216 aa).

7 residues coordinate ATP: Gly-18, Gly-19, Gly-21, Lys-22, Thr-23, Thr-24, and Gln-47. Residue Thr-23 coordinates Mg(2+).

The protein belongs to the ParA family. McdA subfamily. As to quaternary structure, homodimerizes in the presence of ATP. Each subunit binds 1 ATP molecule; some residues cross the dimer interface to contact ATP in the other subunit. Forms a complex with McdB.

It localises to the cytoplasm. The protein resides in the nucleoid. The catalysed reaction is ATP + H2O = ADP + phosphate + H(+). In terms of biological role, mcdA and McdB together mediate carboxysome (Cb) spacing, size, ultrastructure and probably inheritance in the cell, together they prevent Cb aggregation. McdA is an ATPase that forms dynamic gradients on the nucleoid in response to adapter protein McdB, which associates with carboxysomes. The interplay between McdA gradients on the nucleoid and McdB-bound carboxysomes result in the equal spacing of Cbs along the cell length. Its function is as follows. Incorrect positioning (aggregation) of carboxysomes results in reduced CO(2) fixation by encapsulated ribulose-1,5-bisphosphate carboxylase (RuBisCO, cbbL/cbbS), which leads to slower growth. The polypeptide is Maintenance of carboxysome distribution protein A (Gloeobacter kilaueensis (strain ATCC BAA-2537 / CCAP 1431/1 / ULC 316 / JS1)).